The sequence spans 283 residues: uncharacterized protein (283 aa).

This is an uncharacterized protein from Caenorhabditis elegans.